The chain runs to 295 residues: MSIDWEQTFRKWSKPSSETESTKAENAERMIKAAINSSQILSTKDISVFPQGSYRNNTNVREDSDVDICVCLNTLVLSDYSLVPGMNDKLAELRTASYTYKQFKSDLETALKNKFGTLGVSRGDKAFDVHANSYRVDADVVPAIQGRLYYDKNHNAFIRGTCIKPDSGGTIYNWPEQNYSNGVNKNKSTGNRFKLIVRAIKRLRNHLAEKGYNTAKPIPSYLMECLVYIVPDQYFTGDSYKTNVENCINYLYNQIDSSDWTEINEIKYLFGSHQMWNKTQVKEFLLTAWSYIQKN.

Residues 1-25 are disordered; that stretch reads MSIDWEQTFRKWSKPSSETESTKAE. Residues glutamine 51, serine 53, and asparagine 59 each coordinate UTP. Mg(2+) is bound by residues aspartate 65 and aspartate 67. Aspartate 67, aspartate 124, and lysine 125 together coordinate UTP. Mg(2+)-binding residues include aspartate 128 and aspartate 139. 4 residues coordinate UTP: aspartate 139, asparagine 173, lysine 201, and serine 220. The short motif at 274–276 is the Pyrimidine specificity motif (R/Q)xW in donor pocket element; it reads QMW.

The protein belongs to the CD-NTase family. E02 subfamily. Requires Mg(2+) as cofactor.

The enzyme catalyses 2 UTP = c-di-UMP + 2 diphosphate. The catalysed reaction is UTP + CTP = cyclic CMP-UMP + 2 diphosphate. Its function is as follows. Cyclic nucleotide synthase (second messenger synthase) of a CBASS antivirus system. CBASS (cyclic oligonucleotide-based antiphage signaling system) provides immunity against bacteriophage. The CD-NTase protein synthesizes cyclic nucleotides in response to infection; these serve as specific second messenger signals. The signals activate a diverse range of effectors, leading to bacterial cell death and thus abortive phage infection. A type I-B(UU) CBASS system. In terms of biological role, cyclic dinucleotide synthase that catalyzes the synthesis of 3',3'-cyclic UMP-UMP (c-di-UMP) as the major product, and of 3',3'-cyclic CMP-UMP as a minor product, which are second messengers for cell signal transduction. This chain is Cyclic dipyrimidine nucleotide synthase CdnE, found in Legionella pneumophila.